Reading from the N-terminus, the 533-residue chain is Berberine bridge enzyme-like 28 (533 aa).

Positions 1-23 (MEFSSFLFTILLFSLNISPLVSA) are cleaved as a signal peptide. Residues Cys-34 and Cys-96 are joined by a disulfide bond. Positions 74-249 (ETPKPVSIIT…LSWKVKLVDV (176 aa)) constitute an FAD-binding PCMH-type domain. His-111 bears the Pros-8alpha-FAD histidine mark. N-linked (GlcNAc...) asparagine glycosylation is found at Asn-142 and Asn-440.

This sequence belongs to the oxygen-dependent FAD-linked oxidoreductase family. Requires FAD as cofactor.

Its subcellular location is the secreted. It is found in the cell wall. Involved in adaptation to salt stress. In Arabidopsis thaliana (Mouse-ear cress), this protein is Berberine bridge enzyme-like 28.